Reading from the N-terminus, the 476-residue chain is Siroheme synthase (476 aa).

Residues 1–203 (MNYFPVFADL…RQIEAAKKEL (203 aa)) form a precorrin-2 dehydrogenase /sirohydrochlorin ferrochelatase region. NAD(+) is bound by residues 22–23 (TI) and 43–44 (QK). Serine 128 is subject to Phosphoserine. Residues 214–476 (GSVSLVGAGP…LDSLRIERVA (263 aa)) are uroporphyrinogen-III C-methyltransferase. Proline 223 is an S-adenosyl-L-methionine binding site. Aspartate 246 functions as the Proton acceptor in the catalytic mechanism. Lysine 268 (proton donor) is an active-site residue. Residues 299–301 (GGD), valine 304, 329–330 (TA), methionine 381, and glycine 410 contribute to the S-adenosyl-L-methionine site.

This sequence in the N-terminal section; belongs to the precorrin-2 dehydrogenase / sirohydrochlorin ferrochelatase family. It in the C-terminal section; belongs to the precorrin methyltransferase family.

It catalyses the reaction uroporphyrinogen III + 2 S-adenosyl-L-methionine = precorrin-2 + 2 S-adenosyl-L-homocysteine + H(+). It carries out the reaction precorrin-2 + NAD(+) = sirohydrochlorin + NADH + 2 H(+). The catalysed reaction is siroheme + 2 H(+) = sirohydrochlorin + Fe(2+). It participates in cofactor biosynthesis; adenosylcobalamin biosynthesis; precorrin-2 from uroporphyrinogen III: step 1/1. The protein operates within cofactor biosynthesis; adenosylcobalamin biosynthesis; sirohydrochlorin from precorrin-2: step 1/1. Its pathway is porphyrin-containing compound metabolism; siroheme biosynthesis; precorrin-2 from uroporphyrinogen III: step 1/1. It functions in the pathway porphyrin-containing compound metabolism; siroheme biosynthesis; siroheme from sirohydrochlorin: step 1/1. It participates in porphyrin-containing compound metabolism; siroheme biosynthesis; sirohydrochlorin from precorrin-2: step 1/1. Multifunctional enzyme that catalyzes the SAM-dependent methylations of uroporphyrinogen III at position C-2 and C-7 to form precorrin-2 via precorrin-1. Then it catalyzes the NAD-dependent ring dehydrogenation of precorrin-2 to yield sirohydrochlorin. Finally, it catalyzes the ferrochelation of sirohydrochlorin to yield siroheme. The sequence is that of Siroheme synthase from Mannheimia succiniciproducens (strain KCTC 0769BP / MBEL55E).